Consider the following 474-residue polypeptide: 3-isopropylmalate dehydratase large subunit (474 aa).

Residues C353, C414, and C417 each coordinate [4Fe-4S] cluster.

The protein belongs to the aconitase/IPM isomerase family. LeuC type 1 subfamily. Heterodimer of LeuC and LeuD. Requires [4Fe-4S] cluster as cofactor.

It carries out the reaction (2R,3S)-3-isopropylmalate = (2S)-2-isopropylmalate. It functions in the pathway amino-acid biosynthesis; L-leucine biosynthesis; L-leucine from 3-methyl-2-oxobutanoate: step 2/4. Its function is as follows. Catalyzes the isomerization between 2-isopropylmalate and 3-isopropylmalate, via the formation of 2-isopropylmaleate. The polypeptide is 3-isopropylmalate dehydratase large subunit (Xylella fastidiosa (strain M23)).